Here is a 382-residue protein sequence, read N- to C-terminus: GDP-mannose 4,6 dehydratase 2 (382 aa).

NADP(+)-binding positions include 40–45 (GITGQD), 97–98 (DM), 119–123 (LAAQS), and Tyr134. Thr166 is a catalytic residue. Catalysis depends on nucleophile residues Glu168 and Tyr190. NADP(+) is bound by residues Lys194, His220, and Arg225.

The protein belongs to the NAD(P)-dependent epimerase/dehydratase family. GDP-mannose 4,6-dehydratase subfamily. NADP(+) serves as cofactor.

It carries out the reaction GDP-alpha-D-mannose = GDP-4-dehydro-alpha-D-rhamnose + H2O. It functions in the pathway nucleotide-sugar biosynthesis; GDP-L-fucose biosynthesis via de novo pathway; GDP-L-fucose from GDP-alpha-D-mannose: step 1/2. In terms of biological role, catalyzes the conversion of GDP-D-mannose to GDP-4-dehydro-6-deoxy-D-mannose. In Caenorhabditis elegans, this protein is GDP-mannose 4,6 dehydratase 2 (gmd-2).